The following is a 119-amino-acid chain: Beta-2-microglobulin (119 aa).

Residues 1–20 form the signal peptide; it reads MARLVVVALLVLLCLSGLEA. One can recognise an Ig-like C1-type domain in the interval 25 to 114; that stretch reads PKIQVYSRHP…VTFTAPKTVK (90 aa). Cys-45 and Cys-100 are joined by a disulfide.

It belongs to the beta-2-microglobulin family. In terms of assembly, heterodimer of an alpha chain and a beta chain. Beta-2-microglobulin is the beta-chain of major histocompatibility complex class I molecules.

The protein localises to the secreted. In terms of biological role, component of the class I major histocompatibility complex (MHC). Involved in the presentation of peptide antigens to the immune system. The sequence is that of Beta-2-microglobulin (B2M) from Chiropotes satanas (Brown-bearded saki).